Consider the following 65-residue polypeptide: Large ribosomal subunit protein bL35 (65 aa).

This sequence belongs to the bacterial ribosomal protein bL35 family.

In Alkalilimnicola ehrlichii (strain ATCC BAA-1101 / DSM 17681 / MLHE-1), this protein is Large ribosomal subunit protein bL35.